A 178-amino-acid polypeptide reads, in one-letter code: NAD(P)H-quinone oxidoreductase subunit J (178 aa).

The protein belongs to the complex I 30 kDa subunit family. In terms of assembly, NDH-1 can be composed of about 15 different subunits; different subcomplexes with different compositions have been identified which probably have different functions.

It is found in the cellular thylakoid membrane. It catalyses the reaction a plastoquinone + NADH + (n+1) H(+)(in) = a plastoquinol + NAD(+) + n H(+)(out). The catalysed reaction is a plastoquinone + NADPH + (n+1) H(+)(in) = a plastoquinol + NADP(+) + n H(+)(out). Functionally, NDH-1 shuttles electrons from an unknown electron donor, via FMN and iron-sulfur (Fe-S) centers, to quinones in the respiratory and/or the photosynthetic chain. The immediate electron acceptor for the enzyme in this species is believed to be plastoquinone. Couples the redox reaction to proton translocation, and thus conserves the redox energy in a proton gradient. Cyanobacterial NDH-1 also plays a role in inorganic carbon-concentration. The protein is NAD(P)H-quinone oxidoreductase subunit J of Crocosphaera subtropica (strain ATCC 51142 / BH68) (Cyanothece sp. (strain ATCC 51142)).